The primary structure comprises 145 residues: Synaptojanin-2-binding protein (145 aa).

Over 1 to 117 (MNGRVDYLVT…VHRGEGEPSG (117 aa)) the chain is Cytoplasmic. In terms of domain architecture, PDZ spans 13–100 (EINLTRGPSG…AVSLRVQHRL (88 aa)). The helical; Anchor for type IV membrane protein transmembrane segment at 118–138 (VPVAMVLLPVFALTMVAVWAF) threads the bilayer. The Mitochondrial intermembrane segment spans residues 139–145 (VRYRKQL).

In terms of assembly, binds (via the PDZ domain) to isoform 2A of SYNJ2 (via the unique motif in the C-terminus). Interacts (via C-terminus) with RALBP1. Interacts (via PDZ domain) with ACVR2A (via C-terminus) and ACVR2B (via C-terminus). Forms a ternary complex with ACVR2A and RALBP1. Interacts with MAPK12. Interacts with DLL1; enhances DLL1 protein stability, and promotes notch signaling in endothelial cells. Isoform 1 and isoform 2 are widely expressed, notably in brain, heart, lung, liver, kidney, skeletal muscle, ovary and testis. Isoform 3 is detected only in heart, spleen and testis.

The protein resides in the mitochondrion outer membrane. It is found in the cytoplasm. It localises to the perinuclear region. In terms of biological role, isoform 1 regulates endocytosis of activin type 2 receptor kinases through the Ral/RALBP1-dependent pathway and may be involved in suppression of activin-induced signal transduction. Isoform 2 and isoform 3 show a stimulatory affect on activin-induced signal transduction and enhance activin type 2 expression at the cell surface. This is Synaptojanin-2-binding protein from Mus musculus (Mouse).